The primary structure comprises 486 residues: UDP-N-acetylmuramate--L-alanine ligase (486 aa).

126–132 (GTHGKTS) contacts ATP.

Belongs to the MurCDEF family.

Its subcellular location is the cytoplasm. The catalysed reaction is UDP-N-acetyl-alpha-D-muramate + L-alanine + ATP = UDP-N-acetyl-alpha-D-muramoyl-L-alanine + ADP + phosphate + H(+). Its pathway is cell wall biogenesis; peptidoglycan biosynthesis. Cell wall formation. In Corynebacterium glutamicum (strain R), this protein is UDP-N-acetylmuramate--L-alanine ligase.